Consider the following 100-residue polypeptide: MGALTKAEMAERLYEELGLNKREAKELVELFFEEIRQALELNEQVKLSGFGNFDLRDKRQRPGRNPKTGEEIPITARRVVTFRPGQKLKARVEAYAGTKS.

The protein belongs to the bacterial histone-like protein family. In terms of assembly, heterodimer of an alpha and a beta chain.

In terms of biological role, this protein is one of the two subunits of integration host factor, a specific DNA-binding protein that functions in genetic recombination as well as in transcriptional and translational control. The polypeptide is Integration host factor subunit alpha (Ectopseudomonas mendocina (strain ymp) (Pseudomonas mendocina)).